Here is a 37-residue protein sequence, read N- to C-terminus: Large ribosomal subunit protein bL36c (37 aa).

It belongs to the bacterial ribosomal protein bL36 family.

It localises to the plastid. Its subcellular location is the chloroplast. The chain is Large ribosomal subunit protein bL36c from Adiantum capillus-veneris (Maidenhair fern).